A 198-amino-acid chain; its full sequence is Recombination protein RecR (198 aa).

The C4-type zinc-finger motif lies at 57-72 (CSVCGRLTDDDPCIIC). The 96-residue stretch at 80–175 (TKILVVEDSK…KVTRLARGLA (96 aa)) folds into the Toprim domain.

The protein belongs to the RecR family.

In terms of biological role, may play a role in DNA repair. It seems to be involved in an RecBC-independent recombinational process of DNA repair. It may act with RecF and RecO. This Streptococcus thermophilus (strain CNRZ 1066) protein is Recombination protein RecR.